Consider the following 372-residue polypeptide: O-methyltransferase bfoE (372 aa).

Trp-186 is an S-adenosyl-L-methionine binding site. His-285 serves as the catalytic Proton acceptor.

The protein belongs to the class I-like SAM-binding methyltransferase superfamily. Cation-independent O-methyltransferase family.

It participates in secondary metabolite biosynthesis. In terms of biological role, cytochrome P450 monooxygenase; part of the gene cluster that mediates the biosynthesis of bifonsecin B, a dimeric gamma-naphthopyrone. The first step in the biosynthesis of bifonsecin B is the production of gamma-naphthopyrone precursor YWA1 by the non-reducing polyketide synthase albA, via condensation of one acetyl-CoA starter unit with 6 malonyl-CoA units. YWA1 is then methylated by bfoE at position C-6 to yield foncesin which is further methylated at position C-8 by bfoD to produce fonsecin B. A key enzyme in the biosynthetic pathway is the cytochrome P450 monooxygenase bfoB which catalyzes the oxidative dimerization of fonsecin B to bifonsecin B. Bfob also catalyzes the oxidative dimerization of rubrofusarin B into nigerone. The stereoselectivity of bfoB is influenced by the two natural monomeric substrates; homodimerization of fonsecin B yields a stereochemically pure biaryl, M-foncerine B, while rubrofusarin B yields a mixture of enantiomers M- and P-nigerone. The protein is O-methyltransferase bfoE of Aspergillus brasiliensis (strain CBS 101740 / IMI 381727 / IBT 21946).